The chain runs to 284 residues: Bifunctional protein FolD (284 aa).

Residues 165-167, Ser-190, and Ile-231 contribute to the NADP(+) site; that span reads GAS.

The protein belongs to the tetrahydrofolate dehydrogenase/cyclohydrolase family. In terms of assembly, homodimer.

It carries out the reaction (6R)-5,10-methylene-5,6,7,8-tetrahydrofolate + NADP(+) = (6R)-5,10-methenyltetrahydrofolate + NADPH. It catalyses the reaction (6R)-5,10-methenyltetrahydrofolate + H2O = (6R)-10-formyltetrahydrofolate + H(+). It participates in one-carbon metabolism; tetrahydrofolate interconversion. Catalyzes the oxidation of 5,10-methylenetetrahydrofolate to 5,10-methenyltetrahydrofolate and then the hydrolysis of 5,10-methenyltetrahydrofolate to 10-formyltetrahydrofolate. In Bordetella avium (strain 197N), this protein is Bifunctional protein FolD.